The sequence spans 137 residues: Large ribosomal subunit protein uL16 (137 aa).

Basic residues predominate over residues 1-17 (MLQPKRTKFRKQMKGRN). The segment at 1-22 (MLQPKRTKFRKQMKGRNRGLAQ) is disordered.

The protein belongs to the universal ribosomal protein uL16 family. Part of the 50S ribosomal subunit.

In terms of biological role, binds 23S rRNA and is also seen to make contacts with the A and possibly P site tRNAs. The polypeptide is Large ribosomal subunit protein uL16 (Teredinibacter turnerae (strain ATCC 39867 / T7901)).